A 419-amino-acid polypeptide reads, in one-letter code: Innexin-2 (419 aa).

4 helical membrane passes run 33 to 53, 108 to 128, 184 to 204, and 270 to 290; these read AWFT…KQYF, PLVL…WNLF, INYF…MVLL, and LYIC…AGMI.

This sequence belongs to the pannexin family.

The protein resides in the cell membrane. Its subcellular location is the cell junction. It is found in the gap junction. In terms of biological role, structural component of the gap junctions. The chain is Innexin-2 (inx-2) from Caenorhabditis elegans.